A 426-amino-acid polypeptide reads, in one-letter code: Synaptotagmin-13 (426 aa).

Residues 1–6 (MVLSVP) lie on the Vesicular side of the membrane. Residues 7–29 (VIALGATLGTATSILALCGVTCL) traverse the membrane as a helical segment. Topologically, residues 30–426 (CRHMHPKKGL…QIAMWHQLHL (397 aa)) are cytoplasmic. 2 consecutive C2 domains span residues 158–275 (QAPK…AQWG) and 287–422 (GAGE…AMWH).

Belongs to the synaptotagmin family. Interacts with NRXN1. Expressed in brain, pancreas and kidney.

The protein localises to the membrane. Functionally, may be involved in transport vesicle docking to the plasma membrane. This is Synaptotagmin-13 (SYT13) from Homo sapiens (Human).